A 347-amino-acid polypeptide reads, in one-letter code: Eukaryotic translation initiation factor 3 subunit I (347 aa).

6 WD repeats span residues 8–49 (GHER…GTYE), 50–89 (GHNG…CLFT), 146–186 (TFSG…PESG), 198–237 (AHTD…VIKT), 239–278 (ATET…GRFE), and 295–336 (GHFG…SKLY).

The protein belongs to the eIF-3 subunit I family. As to quaternary structure, component of the eukaryotic translation initiation factor 3 (eIF-3) complex.

The protein localises to the cytoplasm. Its function is as follows. Component of the eukaryotic translation initiation factor 3 (eIF-3) complex, which is involved in protein synthesis of a specialized repertoire of mRNAs and, together with other initiation factors, stimulates binding of mRNA and methionyl-tRNAi to the 40S ribosome. The eIF-3 complex specifically targets and initiates translation of a subset of mRNAs involved in cell proliferation. This is Eukaryotic translation initiation factor 3 subunit I from Mycosarcoma maydis (Corn smut fungus).